Consider the following 590-residue polypeptide: MRFTFLRSTRIFLANHQNHLSSLQNIRTIPSSSSSPVAISSVSKLSASLDHLSDVKQEHGFMVKQGIYNSLFLQNKLLQAYTKIREFDDADKLFDEMPLRNIVTWNILIHGVIQRDGDTNHRAHLGFCYLSRILFTDVSLDHVSFMGLIRLCTDSTNMKAGIQLHCLMVKQGLESSCFPSTSLVHFYGKCGLIVEARRVFEAVLDRDLVLWNALVSSYVLNGMIDEAFGLLKLMGSDKNRFRGDYFTFSSLLSACRIEQGKQIHAILFKVSYQFDIPVATALLNMYAKSNHLSDARECFESMVVRNVVSWNAMIVGFAQNGEGREAMRLFGQMLLENLQPDELTFASVLSSCAKFSAIWEIKQVQAMVTKKGSADFLSVANSLISSYSRNGNLSEALLCFHSIREPDLVSWTSVIGALASHGFAEESLQMFESMLQKLQPDKITFLEVLSACSHGGLVQEGLRCFKRMTEFYKIEAEDEHYTCLIDLLGRAGFIDEASDVLNSMPTEPSTHALAAFTGGCNIHEKRESMKWGAKKLLEIEPTKPVNYSILSNAYVSEGHWNQAALLRKRERRNCYNPKTPGCSWLGDYSI.

Residues 1–109 constitute a mitochondrion transit peptide; the sequence is MRFTFLRSTR…RNIVTWNILI (109 aa). 11 PPR repeats span residues 141–175, 176–206, 207–241, 244–266, 275–305, 306–340, 341–375, 376–406, 407–437, 441–471, and 477–507; these read DHVS…GLES, SCFP…VLDR, DLVL…KNRF, DYFT…IHAI, DIPV…MVVR, NVVS…NLQP, DELT…GSAD, FLSV…IREP, DLVS…MLQK, DKIT…MTEF, and EDEH…MPTE. Residues 512–588 form a type E motif region; that stretch reads ALAAFTGGCN…TPGCSWLGDY (77 aa).

The protein belongs to the PPR family. PCMP-E subfamily.

The protein resides in the mitochondrion. The polypeptide is Pentatricopeptide repeat-containing protein At2g46050, mitochondrial (PCMP-E39) (Arabidopsis thaliana (Mouse-ear cress)).